The primary structure comprises 153 residues: SsrA-binding protein (153 aa).

The span at 133-143 (ADLKERDDKRQ) shows a compositional bias: basic and acidic residues. A disordered region spans residues 133-153 (ADLKERDDKRQMQQALKQQQY). A compositionally biased stretch (low complexity) spans 144-153 (MQQALKQQQY).

This sequence belongs to the SmpB family.

It localises to the cytoplasm. In terms of biological role, required for rescue of stalled ribosomes mediated by trans-translation. Binds to transfer-messenger RNA (tmRNA), required for stable association of tmRNA with ribosomes. tmRNA and SmpB together mimic tRNA shape, replacing the anticodon stem-loop with SmpB. tmRNA is encoded by the ssrA gene; the 2 termini fold to resemble tRNA(Ala) and it encodes a 'tag peptide', a short internal open reading frame. During trans-translation Ala-aminoacylated tmRNA acts like a tRNA, entering the A-site of stalled ribosomes, displacing the stalled mRNA. The ribosome then switches to translate the ORF on the tmRNA; the nascent peptide is terminated with the 'tag peptide' encoded by the tmRNA and targeted for degradation. The ribosome is freed to recommence translation, which seems to be the essential function of trans-translation. In Protochlamydia amoebophila (strain UWE25), this protein is SsrA-binding protein.